The following is a 111-amino-acid chain: Cytochrome b-c1 complex subunit 7 (111 aa).

Ala2 is subject to N-acetylalanine. The residue at position 12 (Lys12) is an N6-acetyllysine; alternate. Lys12 is subject to N6-succinyllysine; alternate. Lys19 carries the post-translational modification N6-acetyllysine. N6-acetyllysine; alternate is present on Lys78. An N6-succinyllysine; alternate modification is found at Lys78. An N6-acetyllysine mark is found at Lys83 and Lys96.

It belongs to the UQCRB/QCR7 family. Component of the ubiquinol-cytochrome c oxidoreductase (cytochrome b-c1 complex, complex III, CIII), a multisubunit enzyme composed of 11 subunits. The complex is composed of 3 respiratory subunits cytochrome b, cytochrome c1 and Rieske protein UQCRFS1, 2 core protein subunits UQCRC1/QCR1 and UQCRC2/QCR2, and 6 low-molecular weight protein subunits UQCRH/QCR6, UQCRB/QCR7, UQCRQ/QCR8, UQCR10/QCR9, UQCR11/QCR10 and subunit 9, the cleavage product of Rieske protein UQCRFS1. The complex exists as an obligatory dimer and forms supercomplexes (SCs) in the inner mitochondrial membrane with NADH-ubiquinone oxidoreductase (complex I, CI) and cytochrome c oxidase (complex IV, CIV), resulting in different assemblies (supercomplex SCI(1)III(2)IV(1) and megacomplex MCI(2)III(2)IV(2)).

It is found in the mitochondrion inner membrane. Component of the ubiquinol-cytochrome c oxidoreductase, a multisubunit transmembrane complex that is part of the mitochondrial electron transport chain which drives oxidative phosphorylation. The respiratory chain contains 3 multisubunit complexes succinate dehydrogenase (complex II, CII), ubiquinol-cytochrome c oxidoreductase (cytochrome b-c1 complex, complex III, CIII) and cytochrome c oxidase (complex IV, CIV), that cooperate to transfer electrons derived from NADH and succinate to molecular oxygen, creating an electrochemical gradient over the inner membrane that drives transmembrane transport and the ATP synthase. The cytochrome b-c1 complex catalyzes electron transfer from ubiquinol to cytochrome c, linking this redox reaction to translocation of protons across the mitochondrial inner membrane, with protons being carried across the membrane as hydrogens on the quinol. In the process called Q cycle, 2 protons are consumed from the matrix, 4 protons are released into the intermembrane space and 2 electrons are passed to cytochrome c. The sequence is that of Cytochrome b-c1 complex subunit 7 (UQCRB) from Homo sapiens (Human).